We begin with the raw amino-acid sequence, 132 residues long: Small ribosomal subunit protein uS8 (132 aa).

Belongs to the universal ribosomal protein uS8 family. Part of the 30S ribosomal subunit. Contacts proteins S5 and S12.

In terms of biological role, one of the primary rRNA binding proteins, it binds directly to 16S rRNA central domain where it helps coordinate assembly of the platform of the 30S subunit. This is Small ribosomal subunit protein uS8 from Latilactobacillus sakei subsp. sakei (strain 23K) (Lactobacillus sakei subsp. sakei).